A 288-amino-acid chain; its full sequence is Small ribosomal subunit protein uS2 (288 aa).

Residues 267-288 (EEVEEVEEEFIPSEIEDEDEKF) form a disordered region.

Belongs to the universal ribosomal protein uS2 family.

The sequence is that of Small ribosomal subunit protein uS2 from Petrotoga mobilis (strain DSM 10674 / SJ95).